The primary structure comprises 281 residues: Transcription factor HES-1 (281 aa).

The interval 1-44 is disordered; it reads MPADIMEKNSSSPVAATPASVNTTPDKPKTASEHRKSSKPIMEK. Low complexity predominate over residues 10–21; the sequence is SSSPVAATPASV. Residues 26–35 are compositionally biased toward basic and acidic residues; it reads DKPKTASEHR. The bHLH domain maps to 34 to 91; the sequence is HRKSSKPIMEKRRRARINESLSQLKTLILDALKKDSSRHSKLEKADILEMTVKHLRNL. The Orange domain maps to 110-143; sequence YRAGFSECMNEVTRFLSTCEGVNTEVRTRLLGHL. Disordered regions lie at residues 158-206 and 255-281; these read QAHP…PCKL and TSVG…PWRN. Pro residues-rich tracts occupy residues 164–174 and 182–201; these read QAPPPPPPSGP and FAPP…PPGS. Residues 255–272 are compositionally biased toward polar residues; the sequence is TSVGPNAVSPSSGSSLTA. The WRPW motif motif lies at 276–279; it reads WRPW.

In terms of assembly, interacts with SIRT1. Interacts weakly with TLE2. Interacts with HES6. Transcription repression requires formation of a complex with a corepressor protein of the Groucho/TLE family. Interacts (via WPRW motif) with TLE1. Interacts with an FA complex, composed of FANCA, FANCF, FANCG and FANCL, but not of FANCC, nor FANCE. As to expression, present in all tissues examined but highest in epithelial cells and in mesoderm-derived tissues such as embryonal muscle cells.

The protein localises to the nucleus. In terms of biological role, transcriptional repressor of genes that require a bHLH protein for their transcription. May act as a negative regulator of myogenesis by inhibiting the functions of MYOD1 and ASH1. Binds DNA on N-box motifs: 5'-CACNAG-3' with high affinity and on E-box motifs: 5'-CANNTG-3' with low affinity. May play a role in a functional FA core complex response to DNA cross-link damage, being required for the stability and nuclear localization of FA core complex proteins, as well as for FANCD2 monoubiquitination in response to DNA damage. The chain is Transcription factor HES-1 (Hes1) from Rattus norvegicus (Rat).